Consider the following 475-residue polypeptide: Eukaryotic translation initiation factor 3 subunit L (475 aa).

Residues 257–451 (DAIRMFSHIL…DLDYAMQGDL (195 aa)) enclose the PCI domain.

This sequence belongs to the eIF-3 subunit L family. In terms of assembly, component of the eukaryotic translation initiation factor 3 (eIF-3) complex.

Its subcellular location is the cytoplasm. Its function is as follows. Component of the eukaryotic translation initiation factor 3 (eIF-3) complex, which is involved in protein synthesis of a specialized repertoire of mRNAs and, together with other initiation factors, stimulates binding of mRNA and methionyl-tRNAi to the 40S ribosome. The eIF-3 complex specifically targets and initiates translation of a subset of mRNAs involved in cell proliferation. This is Eukaryotic translation initiation factor 3 subunit L from Sclerotinia sclerotiorum (strain ATCC 18683 / 1980 / Ss-1) (White mold).